Consider the following 615-residue polypeptide: Zinc metalloproteinase-disintegrin-like (615 aa).

The first 20 residues, 1-20 (MIQALLVTICLVGFPHQGSS), serve as a signal peptide directing secretion. Positions 21–195 (IILESGNVKD…KMNFQSANNP (175 aa)) are excised as a propeptide. In terms of domain architecture, Peptidase M12B spans 204-400 (KYIKLAVVVD…DLPQCILNKP (197 aa)). Disulfide bonds link Cys-315–Cys-395, Cys-355–Cys-379, and Cys-357–Cys-362. His-340 serves as a coordination point for Zn(2+). The active site involves Glu-341. Residues His-344 and His-350 each coordinate Zn(2+). The region spanning 408 to 494 (PAVCGNNFVE…DCPMDGLQRN (87 aa)) is the Disintegrin domain. 5 residues coordinate Ca(2+): Val-410, Asn-413, Phe-415, Glu-417, and Asp-423. 14 cysteine pairs are disulfide-bonded: Cys-411/Cys-440, Cys-422/Cys-435, Cys-424/Cys-430, Cys-434/Cys-457, Cys-448/Cys-454, Cys-453/Cys-479, Cys-466/Cys-486, Cys-473/Cys-505, Cys-498/Cys-510, Cys-517/Cys-567, Cys-532/Cys-576, Cys-545/Cys-555, Cys-562/Cys-602, and Cys-596/Cys-608. The D/ECD-tripeptide motif lies at 472–474 (DCD).

It belongs to the venom metalloproteinase (M12B) family. P-III subfamily. P-IIIa sub-subfamily. As to quaternary structure, monomer. It depends on Zn(2+) as a cofactor. As to expression, expressed by the venom gland.

It localises to the secreted. In terms of biological role, snake venom zinc metalloprotease that may induce platelet aggregation. The protein is Zinc metalloproteinase-disintegrin-like of Cerberus rynchops (Dog-faced water snake).